The chain runs to 109 residues: CRISPR-associated endoribonuclease Cas2 (109 aa).

Asp-8 lines the Mg(2+) pocket.

The protein belongs to the CRISPR-associated endoribonuclease Cas2 protein family. In terms of assembly, homodimer, forms a heterotetramer with a Cas1 homodimer. The cofactor is Mg(2+).

In terms of biological role, CRISPR (clustered regularly interspaced short palindromic repeat), is an adaptive immune system that provides protection against mobile genetic elements (viruses, transposable elements and conjugative plasmids). CRISPR clusters contain sequences complementary to antecedent mobile elements and target invading nucleic acids. CRISPR clusters are transcribed and processed into CRISPR RNA (crRNA). Functions as a ssRNA-specific endoribonuclease. Involved in the integration of spacer DNA into the CRISPR cassette. This Streptococcus mutans serotype c (strain ATCC 700610 / UA159) protein is CRISPR-associated endoribonuclease Cas2.